The chain runs to 438 residues: Adenylyltransferase and sulfurtransferase UBA4 (438 aa).

Residues Gly81, Asp102, 109–113, Lys126, and 170–171 contribute to the ATP site; these read SNLHR and DH. 2 residues coordinate Zn(2+): Cys212 and Cys215. The Glycyl thioester intermediate; for adenylyltransferase activity role is filled by Cys229. Zn(2+) is bound by residues Cys290 and Cys293. Residues 340–436 enclose the Rhodanese domain; sequence NKKKHILIDV…WSDDVDSKIP (97 aa). Cys396 acts as the Cysteine persulfide intermediate; for sulfurtransferase activity in catalysis.

This sequence in the N-terminal section; belongs to the HesA/MoeB/ThiF family. UBA4 subfamily. Zn(2+) serves as cofactor.

The protein localises to the cytoplasm. It is found in the cytosol. It functions in the pathway tRNA modification; 5-methoxycarbonylmethyl-2-thiouridine-tRNA biosynthesis. Its function is as follows. Plays a central role in 2-thiolation of mcm(5)S(2)U at tRNA wobble positions of cytosolic tRNA(Lys), tRNA(Glu) and tRNA(Gln). Acts by mediating the C-terminal thiocarboxylation of sulfur carrier URM1. Its N-terminus first activates URM1 as acyl-adenylate (-COAMP), then the persulfide sulfur on the catalytic cysteine is transferred to URM1 to form thiocarboxylation (-COSH) of its C-terminus. The reaction probably involves hydrogen sulfide that is generated from the persulfide intermediate and that acts as a nucleophile towards URM1. Subsequently, a transient disulfide bond is formed. Does not use thiosulfate as sulfur donor; NFS1 probably acting as a sulfur donor for thiocarboxylation reactions. Prior mcm(5) tRNA modification by the elongator complex is required for 2-thiolation. May also be involved in protein urmylation. This Candida albicans (strain SC5314 / ATCC MYA-2876) (Yeast) protein is Adenylyltransferase and sulfurtransferase UBA4.